A 171-amino-acid chain; its full sequence is Small ribosomal subunit protein uS5 (171 aa).

The S5 DRBM domain occupies 16–79 (LVERLVTVDR…EAAKRNMITV (64 aa)).

Belongs to the universal ribosomal protein uS5 family. As to quaternary structure, part of the 30S ribosomal subunit. Contacts proteins S4 and S8.

In terms of biological role, with S4 and S12 plays an important role in translational accuracy. Located at the back of the 30S subunit body where it stabilizes the conformation of the head with respect to the body. The sequence is that of Small ribosomal subunit protein uS5 from Psychrobacter arcticus (strain DSM 17307 / VKM B-2377 / 273-4).